The primary structure comprises 956 residues: DNA polymerase I (956 aa).

Residues 209 to 296 (VTVRQWVDYR…VTDLPLDIEF (88 aa)) enclose the 5'-3' exonuclease domain.

This sequence belongs to the DNA polymerase type-A family. As to quaternary structure, single-chain monomer with multiple functions.

It catalyses the reaction DNA(n) + a 2'-deoxyribonucleoside 5'-triphosphate = DNA(n+1) + diphosphate. In terms of biological role, a DNA polymerase, required for DNA repair after DNA damage induced by ionizing radiation (IR); this is not the major DNA polymerase. Following severe irradiation (7 kGy of gamma irradiation) genomic DNA is fragmented. DNA is progressively degraded for the first 1.5 hours after IR, in a step promoted by RecA and counterbalanced by DNA Pol I and Pol III, followed by massive DNA synthesis and genome reassembly in the next hour. Optimal priming of DNA synthesis requires both RecA and RadA, Pol III initiates DNA synthesis while both Pol I and Pol III are required for its continuation. May also have 5'-3' exonuclease activity. The sequence is that of DNA polymerase I (polA) from Deinococcus radiodurans (strain ATCC 13939 / DSM 20539 / JCM 16871 / CCUG 27074 / LMG 4051 / NBRC 15346 / NCIMB 9279 / VKM B-1422 / R1).